Here is a 208-residue protein sequence, read N- to C-terminus: MTNPHADRLIAFLISSGISDQRVLDAIYRLPRESFVSQAMMHQAYDNNALPIGQGQTISQPYIVAKMTELLDLKSDSNVLEIGTGSGYQTAVLAQIVDHVYSVERIKSLQWDAKRRLKQLDIYNVSTKHGDGWLGWEAKGPFDAIIVTAAAESVPQALLSQLKEGGKMIIPVGEEEQQLLKIERQGEQYLSTVVEMVRFVPLVAGDLA.

Residue Ser59 is part of the active site.

The protein belongs to the methyltransferase superfamily. L-isoaspartyl/D-aspartyl protein methyltransferase family.

It is found in the cytoplasm. It carries out the reaction [protein]-L-isoaspartate + S-adenosyl-L-methionine = [protein]-L-isoaspartate alpha-methyl ester + S-adenosyl-L-homocysteine. Its function is as follows. Catalyzes the methyl esterification of L-isoaspartyl residues in peptides and proteins that result from spontaneous decomposition of normal L-aspartyl and L-asparaginyl residues. It plays a role in the repair and/or degradation of damaged proteins. This Vibrio campbellii (strain ATCC BAA-1116) protein is Protein-L-isoaspartate O-methyltransferase.